Here is a 184-residue protein sequence, read N- to C-terminus: UPF0316 protein BPUM_0594 (184 aa).

Helical transmembrane passes span 9 to 29 (AFTM…FSTM), 41 to 61 (AAAF…SIVL), and 67 to 87 (IQNV…GMKI).

This sequence belongs to the UPF0316 family.

Its subcellular location is the cell membrane. The polypeptide is UPF0316 protein BPUM_0594 (Bacillus pumilus (strain SAFR-032)).